Consider the following 70-residue polypeptide: ATP synthase subunit c (70 aa).

Helical transmembrane passes span 4–24 (IAAGIALCGSAIGAGIGNGML) and 48–68 (ISMALVEAMPIIVIAMSFVLI).

The protein belongs to the ATPase C chain family. In terms of assembly, F-type ATPases have 2 components, F(1) - the catalytic core - and F(0) - the membrane proton channel. F(1) has five subunits: alpha(3), beta(3), gamma(1), delta(1), epsilon(1). F(0) has three main subunits: a(1), b(2) and c(10-14). The alpha and beta chains form an alternating ring which encloses part of the gamma chain. F(1) is attached to F(0) by a central stalk formed by the gamma and epsilon chains, while a peripheral stalk is formed by the delta and b chains.

It is found in the cell membrane. F(1)F(0) ATP synthase produces ATP from ADP in the presence of a proton or sodium gradient. F-type ATPases consist of two structural domains, F(1) containing the extramembraneous catalytic core and F(0) containing the membrane proton channel, linked together by a central stalk and a peripheral stalk. During catalysis, ATP synthesis in the catalytic domain of F(1) is coupled via a rotary mechanism of the central stalk subunits to proton translocation. Its function is as follows. Key component of the F(0) channel; it plays a direct role in translocation across the membrane. A homomeric c-ring of between 10-14 subunits forms the central stalk rotor element with the F(1) delta and epsilon subunits. The protein is ATP synthase subunit c of Oenococcus oeni (strain ATCC BAA-331 / PSU-1).